The sequence spans 109 residues: Aquaporin-2 (109 aa).

Residues 1–6 (SVAFSR) are Cytoplasmic-facing. The helical transmembrane segment at 7 to 27 (AVFAEFLATLLFVFFGLGSAL) threads the bilayer. The Extracellular segment spans residues 28 to 35 (NWPQALPS). The chain crosses the membrane as a helical span at residues 36–54 (VLQIAMAFGLGIGTLVQAL). Residues 55-59 (GHVSG) are Cytoplasmic-facing. An intramembrane region (discontinuously helical) is located at residues 60-69 (AHINPAVTVA). Residues 63–65 (NPA) carry the NPA 1 motif. Topologically, residues 70-80 (CLVGCHVSFLR) are cytoplasmic. A helical transmembrane segment spans residues 81–102 (AAFYVAAQLLGAVAGAALLHEI). The Extracellular portion of the chain corresponds to 103–109 (TPPHVRG).

It belongs to the MIP/aquaporin (TC 1.A.8) family. As to quaternary structure, homotetramer. Post-translationally, serine phosphorylation is necessary and sufficient for expression at the apical membrane. Endocytosis is not phosphorylation-dependent. N-glycosylated.

The protein localises to the apical cell membrane. It is found in the basolateral cell membrane. Its subcellular location is the cell membrane. It localises to the cytoplasmic vesicle membrane. The protein resides in the golgi apparatus. The protein localises to the trans-Golgi network membrane. The enzyme catalyses H2O(in) = H2O(out). It carries out the reaction glycerol(in) = glycerol(out). Forms a water-specific channel that provides the plasma membranes of renal collecting duct with high permeability to water, thereby permitting water to move in the direction of an osmotic gradient. Plays an essential role in renal water homeostasis. Could also be permeable to glycerol. The chain is Aquaporin-2 from Canis lupus familiaris (Dog).